The primary structure comprises 633 residues: Mitochondrial Rho GTPase 1 (633 aa).

A Miro 1 domain is found at 1 to 170; sequence MATVRICVCG…FFLCQKAVTH (170 aa). Over 1 to 603 the chain is Cytoplasmic; that stretch reads MATVRICVCG…PRSEEDVEGK (603 aa). GTP-binding positions include 10-17, 59-63, and 115-118; these read GDEGTGKS, DTSAL, and NKSD. EF-hand domains lie at 186 to 221 and 306 to 341; these read AAVA…CFEK and EGYR…TPGL. Ca(2+)-binding residues include D199, D201, D203, Y205, E210, D319, D321, D323, and E330. The disordered stretch occupies residues 398 to 418; it reads NPSTTAALKVTRPRKRRKRPG. Residues 408–418 show a composition bias toward basic residues; sequence TRPRKRRKRPG. The Miro 2 domain maps to 422–588; the sequence is RNVVLGHVLG…FVHIAEAAME (167 aa). Residues 431-438, 467-471, and 537-540 each bind GTP; these read GPPGSGKS, ELPGG, and LKAD. The chain crosses the membrane as a helical; Anchor for type IV membrane protein span at residues 604–624; sequence WMAWGIALGAVVCAGAAAVMI. The Mitochondrial intermembrane segment spans residues 625 to 633; that stretch reads WRRVSGSGT.

It belongs to the mitochondrial Rho GTPase family.

The protein resides in the mitochondrion outer membrane. Functionally, mitochondrial GTPase involved in mitochondrial trafficking. Probably involved in control of anterograde transport of mitochondria and their subcellular distribution. This Aspergillus oryzae (strain ATCC 42149 / RIB 40) (Yellow koji mold) protein is Mitochondrial Rho GTPase 1 (gem1).